The following is a 325-amino-acid chain: Aldo-keto reductase family 1 member A1 (325 aa).

Ala-2 is subject to N-acetylalanine. A Phosphoserine modification is found at Ser-4. Residues 11-20 (GQKMPLIGLG), Thr-21, Trp-22, and Asp-45 each bind NADP(+). Catalysis depends on Tyr-50, which acts as the Proton donor. At Lys-127 the chain carries N6-acetyllysine; alternate. At Lys-127 the chain carries N6-succinyllysine; alternate. Lys-145 is modified (N6-succinyllysine). Residues Ser-162, Asn-163, Ser-211, Leu-213, Ser-215, Ser-216, Lys-263, Ser-264, Val-265, Thr-266, Arg-269, Gln-272, and Asn-273 each contribute to the NADP(+) site. A Phosphoserine modification is found at Ser-211.

The protein belongs to the aldo/keto reductase family. As to quaternary structure, monomer.

The protein resides in the cytoplasm. The protein localises to the cytosol. It localises to the apical cell membrane. It carries out the reaction a primary alcohol + NADP(+) = an aldehyde + NADPH + H(+). It catalyses the reaction glycerol + NADP(+) = D-glyceraldehyde + NADPH + H(+). The enzyme catalyses glycerol + NADP(+) = L-glyceraldehyde + NADPH + H(+). The catalysed reaction is L-gulonate + NADP(+) = aldehydo-D-glucuronate + NADPH + H(+). It carries out the reaction L-gulono-1,4-lactone + NADP(+) = D-glucurono-3,6-lactone + NADPH + H(+). It catalyses the reaction allyl alcohol + NADP(+) = acrolein + NADPH + H(+). The enzyme catalyses hydroxyacetone + NADP(+) = methylglyoxal + NADPH + H(+). The catalysed reaction is 3-deoxyfructose + NADP(+) = 3-deoxyglucosone + NADPH + H(+). It carries out the reaction (R)-mevalonate + NADP(+) = (R)-mevaldate + NADPH + H(+). It catalyses the reaction pyridine 3-methanol + NADP(+) = pyridine-3-carbaldehyde + NADPH + H(+). The enzyme catalyses S-nitroso-CoA + NADPH + H(+) = sulfinamide-CoA + NADP(+). The catalysed reaction is S-nitrosoglutathione + NADPH + H(+) = S-(hydroxysulfenamide)glutathione + NADP(+). Its function is as follows. Catalyzes the NADPH-dependent reduction of a wide variety of carbonyl-containing compounds to their corresponding alcohols. Displays enzymatic activity towards endogenous metabolites such as aromatic and aliphatic aldehydes, ketones, monosaccharides and bile acids, with a preference for negatively charged substrates, such as glucuronate and succinic semialdehyde. Plays an important role in ascorbic acid biosynthesis by catalyzing the reduction of D-glucuronic acid and D-glucurono-gamma-lactone. Functions as a detoxifiying enzyme by reducing a range of toxic aldehydes. Reduces methylglyoxal and 3-deoxyglucosone, which are present at elevated levels under hyperglycemic conditions and are cytotoxic. Involved also in the detoxification of lipid-derived aldehydes like acrolein. Plays a role in the activation of procarcinogens, such as polycyclic aromatic hydrocarbon trans-dihydrodiols, and in the metabolism of various xenobiotics and drugs. Also acts as an inhibitor of protein S-nitrosylation by mediating degradation of S-nitroso-coenzyme A (S-nitroso-CoA), a cofactor required to S-nitrosylate proteins. S-nitroso-CoA reductase activity is involved in reprogramming intermediary metabolism in renal proximal tubules, notably by inhibiting protein S-nitrosylation of isoform 2 of PKM (PKM2). Also acts as a S-nitroso-glutathione reductase by catalyzing the NADPH-dependent reduction of S-nitrosoglutathione. Displays no reductase activity towards retinoids. The protein is Aldo-keto reductase family 1 member A1 (AKR1A1) of Sus scrofa (Pig).